The following is a 201-amino-acid chain: Peptide deformylase (201 aa).

Fe cation-binding residues include C121 and H163. Residue E164 is part of the active site. H167 is a binding site for Fe cation.

It belongs to the polypeptide deformylase family. It depends on Fe(2+) as a cofactor.

The catalysed reaction is N-terminal N-formyl-L-methionyl-[peptide] + H2O = N-terminal L-methionyl-[peptide] + formate. Functionally, removes the formyl group from the N-terminal Met of newly synthesized proteins. Requires at least a dipeptide for an efficient rate of reaction. N-terminal L-methionine is a prerequisite for activity but the enzyme has broad specificity at other positions. In Synechococcus sp. (strain CC9902), this protein is Peptide deformylase.